The sequence spans 181 residues: Shikimate kinase 2 (181 aa).

12–17 (GCGKTT) is a binding site for ATP. Residues threonine 16 and aspartate 32 each contribute to the Mg(2+) site. Positions 34, 58, and 79 each coordinate substrate. The tract at residues 112 to 126 (EAEPEADLRPTLTGK) is LID domain. Arginine 120 is an ATP binding site. Arginine 139 serves as a coordination point for substrate.

This sequence belongs to the shikimate kinase family. AroL subfamily. Monomer. Requires Mg(2+) as cofactor.

It is found in the cytoplasm. The catalysed reaction is shikimate + ATP = 3-phosphoshikimate + ADP + H(+). The protein operates within metabolic intermediate biosynthesis; chorismate biosynthesis; chorismate from D-erythrose 4-phosphate and phosphoenolpyruvate: step 5/7. In terms of biological role, catalyzes the specific phosphorylation of the 3-hydroxyl group of shikimic acid using ATP as a cosubstrate. The sequence is that of Shikimate kinase 2 from Salmonella heidelberg (strain SL476).